Here is a 205-residue protein sequence, read N- to C-terminus: Urease accessory protein UreE (205 aa).

The segment at 171–205 (AHEAHPHAHSHAGGHGHVHSGHGHGGKHGEHDAES) is disordered. Residues 177–196 (HAHSHAGGHGHVHSGHGHGG) show a composition bias toward basic residues.

This sequence belongs to the UreE family.

The protein localises to the cytoplasm. Its function is as follows. Involved in urease metallocenter assembly. Binds nickel. Probably functions as a nickel donor during metallocenter assembly. This Bordetella parapertussis (strain 12822 / ATCC BAA-587 / NCTC 13253) protein is Urease accessory protein UreE.